Consider the following 313-residue polypeptide: UDP-N-acetylenolpyruvoylglucosamine reductase (313 aa).

The FAD-binding PCMH-type domain occupies 31-207 (VGGPADALVA…TGVDLGLGFD (177 aa)). Arg-180 is a catalytic residue. The active-site Proton donor is Cys-236. The active site involves Glu-307.

This sequence belongs to the MurB family. FAD serves as cofactor.

The protein localises to the cytoplasm. The catalysed reaction is UDP-N-acetyl-alpha-D-muramate + NADP(+) = UDP-N-acetyl-3-O-(1-carboxyvinyl)-alpha-D-glucosamine + NADPH + H(+). It functions in the pathway cell wall biogenesis; peptidoglycan biosynthesis. Cell wall formation. This Desulfosudis oleivorans (strain DSM 6200 / JCM 39069 / Hxd3) (Desulfococcus oleovorans) protein is UDP-N-acetylenolpyruvoylglucosamine reductase.